Consider the following 170-residue polypeptide: MERRLVVTLQCLVLLYLAPECGGTDQCDNFPQMLRDLRDAFSRVKTFFQTKDEVDNLLLKESLLEDFKGYLGCQALSEMIQFYLEEVMPQAENQDPEAKDHVNSLGENLKTLRLRLRRCHRFLPCENKSKAVEQIKNAFNKLQEKGIYKAMSEFDIFINYIEAYMTIKAR.

Positions 1 to 23 (MERRLVVTLQCLVLLYLAPECGG) are cleaved as a signal peptide. 2 disulfides stabilise this stretch: Cys-27-Cys-119 and Cys-73-Cys-125. A coiled-coil region spans residues 97–145 (EAKDHVNSLGENLKTLRLRLRRCHRFLPCENKSKAVEQIKNAFNKLQEK). N-linked (GlcNAc...) asparagine; by host glycosylation occurs at Asn-127.

Belongs to the IL-10 family. Homodimer.

It is found in the secreted. Inhibits IFN-gamma synthesis. Down-regulates the expression of the host TAP1 gene (transporter associated with antigen processing), thereby affecting the transport of peptides into the endoplasmic reticulum and subsequent peptide loading by MHC class I molecules. In consequence, infected cells are masked for immune recognition by cytotoxic T-lymphocytes. This chain is Viral interleukin-10 homolog, found in Epstein-Barr virus (strain AG876) (HHV-4).